We begin with the raw amino-acid sequence, 275 residues long: Large ribosomal subunit protein uL2 (275 aa).

The segment at 223-275 is disordered; sequence VAMNPVDHPHGGGEGRTSGGRHPVSPWGQPTKGYKTRSNKRTDKYIVRRRNKK.

This sequence belongs to the universal ribosomal protein uL2 family. As to quaternary structure, part of the 50S ribosomal subunit. Forms a bridge to the 30S subunit in the 70S ribosome.

In terms of biological role, one of the primary rRNA binding proteins. Required for association of the 30S and 50S subunits to form the 70S ribosome, for tRNA binding and peptide bond formation. It has been suggested to have peptidyltransferase activity; this is somewhat controversial. Makes several contacts with the 16S rRNA in the 70S ribosome. The polypeptide is Large ribosomal subunit protein uL2 (Shewanella piezotolerans (strain WP3 / JCM 13877)).